Consider the following 336-residue polypeptide: Abasic site processing protein HMCES (336 aa).

The active-site Nucleophile is Cys2. The residue at position 2 (Cys2) is a Thiazolidine linkage to a ring-opened DNA abasic site. The segment covering 29–38 has biased composition (basic and acidic residues); that stretch reads QPEWLREGRY. Residues 29-52 are disordered; sequence QPEWLREGRYRPSYNKGPQSSGPV. Glu127 is an active-site residue. The disordered stretch occupies residues 283–336; the sequence is LKSSQEGSPQKKEDTLPRWKSQFIHSPSPKKSSAGILRQWLGQEGGPPAKKQKA.

This sequence belongs to the SOS response-associated peptidase family.

The protein localises to the chromosome. Formation and reversal of DNA-protein cross-link depends on DNA context. Catalyzes formation of the thiazolidine linkage in presence of abasic sites in single-stranded DNA. Mediates the reversal of the thiazolidine cross-link in presence of double stranded DNA. In terms of biological role, sensor of abasic sites in single-stranded DNA (ssDNA) required to preserve genome integrity by promoting error-free repair of abasic sites. Acts as an enzyme that recognizes and binds abasic sites in ssDNA at replication forks and chemically modifies the lesion by forming a covalent cross-link with DNA: forms a stable thiazolidine linkage between a ring-opened abasic site and the alpha-amino and sulfhydryl substituents of its N-terminal catalytic cysteine residue. The HMCES DNA-protein cross-link is then either reversed or degraded. HMCES is able to catalyze the reversal of its thiazolidine cross-link and cycle between a cross-link and a non-cross-linked state depending on DNA context: mediates self-reversal of the thiazolidine cross-link in double stranded DNA, allowing APEX1 to initiate downstream repair of abasic sites. The HMCES DNA-protein cross-link can also be degraded by the SPRTN metalloprotease following unfolding by the BRIP1/FANCJ helicase. Promotes error-free repair of abasic sites by protecting abasic sites from translesion synthesis (TLS) polymerases and endonucleases that are error-prone and would generate mutations and double-strand breaks. Acts as a protease: mediates autocatalytic processing of its N-terminal methionine in order to expose the catalytic cysteine. The HMCES DNA-protein cross-link is then either reversed or degraded. According to a model, the HMCES DNA-protein cross-link. The protein is Abasic site processing protein HMCES of Gallus gallus (Chicken).